Reading from the N-terminus, the 63-residue chain is MLGQSIRRFTTSVVRRSHYEEGPGKNIPFSVENKWRLLAMMTLFFGSGFAAPFFIVRHQLLKK.

A mitochondrion-targeting transit peptide spans 1–16; sequence MLGQSIRRFTTSVVRR. The Mitochondrial matrix portion of the chain corresponds to 17 to 33; it reads SHYEEGPGKNIPFSVEN. At Lys-25 the chain carries N6-acetyllysine; alternate. An N6-succinyllysine; alternate modification is found at Lys-25. The helical transmembrane segment at 34–60 threads the bilayer; that stretch reads KWRLLAMMTLFFGSGFAAPFFIVRHQL. Over 61–63 the chain is Mitochondrial intermembrane; that stretch reads LKK.

Belongs to the cytochrome c oxidase VIIc family. As to quaternary structure, component of the cytochrome c oxidase (complex IV, CIV), a multisubunit enzyme composed of 14 subunits. The complex is composed of a catalytic core of 3 subunits MT-CO1, MT-CO2 and MT-CO3, encoded in the mitochondrial DNA, and 11 supernumerary subunits COX4I1 (or COX4I2), COX5A, COX5B, COX6A2 (or COX6A1), COX6B1 (or COX6B2), COX6C, COX7A1 (or COX7A2), COX7B, COX7C, COX8B and NDUFA4, which are encoded in the nuclear genome. The complex exists as a monomer or a dimer and forms supercomplexes (SCs) in the inner mitochondrial membrane with NADH-ubiquinone oxidoreductase (complex I, CI) and ubiquinol-cytochrome c oxidoreductase (cytochrome b-c1 complex, complex III, CIII), resulting in different assemblies (supercomplex SCI(1)III(2)IV(1) and megacomplex MCI(2)III(2)IV(2)). Interacts with RAB5IF. As to expression, liver, heart, muscle and brain, contain the same isoform of COX VIIc, but at different concentrations.

The protein resides in the mitochondrion inner membrane. It participates in energy metabolism; oxidative phosphorylation. Component of the cytochrome c oxidase, the last enzyme in the mitochondrial electron transport chain which drives oxidative phosphorylation. The respiratory chain contains 3 multisubunit complexes succinate dehydrogenase (complex II, CII), ubiquinol-cytochrome c oxidoreductase (cytochrome b-c1 complex, complex III, CIII) and cytochrome c oxidase (complex IV, CIV), that cooperate to transfer electrons derived from NADH and succinate to molecular oxygen, creating an electrochemical gradient over the inner membrane that drives transmembrane transport and the ATP synthase. Cytochrome c oxidase is the component of the respiratory chain that catalyzes the reduction of oxygen to water. Electrons originating from reduced cytochrome c in the intermembrane space (IMS) are transferred via the dinuclear copper A center (CU(A)) of subunit 2 and heme A of subunit 1 to the active site in subunit 1, a binuclear center (BNC) formed by heme A3 and copper B (CU(B)). The BNC reduces molecular oxygen to 2 water molecules using 4 electrons from cytochrome c in the IMS and 4 protons from the mitochondrial matrix. This chain is Cytochrome c oxidase subunit 7C, mitochondrial (COX7C), found in Bos taurus (Bovine).